The sequence spans 157 residues: Putative gamma-glutamylcyclotransferase CG2811 (157 aa).

Residue 14-17 coordinates substrate; it reads YGTL. Catalysis depends on Glu89, which acts as the Proton acceptor.

This sequence belongs to the gamma-glutamylcyclotransferase family.

Its function is as follows. Putative gamma-glutamylcyclotransferase. In Drosophila melanogaster (Fruit fly), this protein is Putative gamma-glutamylcyclotransferase CG2811.